Reading from the N-terminus, the 135-residue chain is Cytochrome b-c1 complex subunit 6, mitochondrial (135 aa).

The interval 1-70 (MSFFRDLLES…ETADPLDTLR (70 aa)) is disordered. A compositionally biased stretch (acidic residues) spans 19–64 (EPVEDVEVEQPEDAPEEEVSEETVEEEEDDDEDDDEDDEEEEETAD).

Belongs to the UQCRH/QCR6 family. As to quaternary structure, component of the ubiquinol-cytochrome c oxidoreductase (cytochrome b-c1 complex, complex III, CIII), a multisubunit enzyme composed of 10 subunits. The complex is composed of 3 respiratory subunits cytochrome b (COB), cytochrome c1 (CYT1) and Rieske protein (RIP1), 2 core protein subunits COR1 and QCR2, and 5 low-molecular weight protein subunits QCR6, QCR7, QCR8, QCR9 and QCR10. The complex exists as an obligatory dimer and forms supercomplexes (SCs) in the inner mitochondrial membrane with a monomer or a dimer of cytochrome c oxidase (complex IV, CIV), resulting in 2 different assemblies (supercomplexes III(2)IV and III(2)IV(2)).

The protein resides in the mitochondrion inner membrane. In terms of biological role, component of the ubiquinol-cytochrome c oxidoreductase, a multisubunit transmembrane complex that is part of the mitochondrial electron transport chain which drives oxidative phosphorylation. The complex plays an important role in the uptake of multiple carbon sources present in different host niches. This chain is Cytochrome b-c1 complex subunit 6, mitochondrial, found in Candida albicans (strain SC5314 / ATCC MYA-2876) (Yeast).